The primary structure comprises 466 residues: Cysteine--tRNA ligase (466 aa).

Position 29 (cysteine 29) interacts with Zn(2+). The short motif at 31–41 (ATVQAAPHIGH) is the 'HIGH' region element. Positions 208, 233, and 237 each coordinate Zn(2+). Positions 264–268 (KMSKS) match the 'KMSKS' region motif. Lysine 267 is an ATP binding site.

Belongs to the class-I aminoacyl-tRNA synthetase family. As to quaternary structure, monomer. Requires Zn(2+) as cofactor.

The protein resides in the cytoplasm. It catalyses the reaction tRNA(Cys) + L-cysteine + ATP = L-cysteinyl-tRNA(Cys) + AMP + diphosphate. This Streptomyces griseus subsp. griseus (strain JCM 4626 / CBS 651.72 / NBRC 13350 / KCC S-0626 / ISP 5235) protein is Cysteine--tRNA ligase.